Reading from the N-terminus, the 209-residue chain is MSKVTQITHPLILHKLALIRDKRTGSKDFRELVEEVAMLMAYEVTRNLQTEEVEIETPICNTTCKMLSGKKVAVVPILRAGLGMVGGMLKLIPAAKVGHIGLYRDETTLKPVEYFCKLPQDIGEREVIVTDPMLATGGSAIDAITMLKQKGAKNIRLMCLIAAEDGIKSVTEAHPDVDIYTAAIDKELNKNGYIVPGLGDAGDRLYGTK.

5-phospho-alpha-D-ribose 1-diphosphate contacts are provided by residues R79, R104, and 131-139; that span reads DPMLATGGS. Residues I194 and 199 to 201 contribute to the uracil site; that span reads GDA. D200 provides a ligand contact to 5-phospho-alpha-D-ribose 1-diphosphate.

This sequence belongs to the UPRTase family. Mg(2+) serves as cofactor.

It catalyses the reaction UMP + diphosphate = 5-phospho-alpha-D-ribose 1-diphosphate + uracil. It functions in the pathway pyrimidine metabolism; UMP biosynthesis via salvage pathway; UMP from uracil: step 1/1. Its activity is regulated as follows. Allosterically activated by GTP. Functionally, catalyzes the conversion of uracil and 5-phospho-alpha-D-ribose 1-diphosphate (PRPP) to UMP and diphosphate. The sequence is that of Uracil phosphoribosyltransferase from Clostridium kluyveri (strain NBRC 12016).